The sequence spans 339 residues: tRNA N6-adenosine threonylcarbamoyltransferase (339 aa).

Fe cation-binding residues include His-117 and His-121. Residues 140–144, Asp-173, Gly-186, and Asn-279 each bind substrate; that span reads VVSGG. Residue Asp-307 participates in Fe cation binding.

This sequence belongs to the KAE1 / TsaD family. It depends on Fe(2+) as a cofactor.

It localises to the cytoplasm. It catalyses the reaction L-threonylcarbamoyladenylate + adenosine(37) in tRNA = N(6)-L-threonylcarbamoyladenosine(37) in tRNA + AMP + H(+). Its function is as follows. Required for the formation of a threonylcarbamoyl group on adenosine at position 37 (t(6)A37) in tRNAs that read codons beginning with adenine. Is involved in the transfer of the threonylcarbamoyl moiety of threonylcarbamoyl-AMP (TC-AMP) to the N6 group of A37, together with TsaE and TsaB. TsaD likely plays a direct catalytic role in this reaction. This is tRNA N6-adenosine threonylcarbamoyltransferase from Syntrophomonas wolfei subsp. wolfei (strain DSM 2245B / Goettingen).